The sequence spans 215 residues: Putative glycosyltransferase ALG1L2 (215 aa).

Positions 40-66 are disordered; it reads PFRARSEPEDPDTERSAFTERDSGSGL. Over residues 43–62 the composition is skewed to basic and acidic residues; that stretch reads ARSEPEDPDTERSAFTERDS.

This sequence belongs to the glycosyltransferase group 1 family.

Functionally, putative glycosyltransferase. This Homo sapiens (Human) protein is Putative glycosyltransferase ALG1L2 (ALG1L2).